The sequence spans 860 residues: Elastin (860 aa).

The first 27 residues, 1 to 27, serve as a signal peptide directing secretion; that stretch reads MAGLTAVVPQPGVLLILLLNLLHPAQP. A 4-hydroxyproline mark is found at P35 and P72. P84 is subject to Hydroxyproline. Residue P105 is modified to 4-hydroxyproline. Allysine is present on residues K123 and K127. 4 positions are modified to 4-hydroxyproline: P217, P230, P233, and P253. Residues K299, K318, and K321 each carry the allysine modification. P346 carries the post-translational modification 4-hydroxyproline. K368 and K371 each carry allysine. The residue at position 383 (P383) is a Hydroxyproline. 4-hydroxyproline is present on residues P399 and P405. Hydroxyproline is present on residues P410 and P415. Allysine is present on residues K431, K435, K438, K481, and K484. 4-hydroxyproline occurs at positions 498 and 519. Allysine is present on residues K534, K595, K599, and K603. A 4-hydroxyproline mark is found at P617, P626, P644, P653, and P661. Residues K668 and K671 each carry the allysine modification. P702 bears the 4-hydroxyproline mark. 4 positions are modified to allysine: K719, K723, K783, and K786. The residue at position 832 (P832) is a 4-hydroxyproline. C850 and C855 form a disulfide bridge.

Belongs to the elastin family. As to quaternary structure, the polymeric elastin chains are cross-linked together into an extensible 3D network. Forms a ternary complex with BGN and MFAP2. Interacts with MFAP2 via divalent cations (calcium &gt; magnesium &gt; manganese) in a dose-dependent and saturating manner. Interacts with FBLN5 and FBN1. Forms a ternary complex with FBN1 and FBLN2 or FBLN5. Interacts with MFAP4 in a Ca (2+)-dependent manner; this interaction promotes ELN self-assembly. Interacts with EFEMP2 with moderate affinity. Elastin is formed through the cross-linking of its soluble precursor tropoelastin. Cross-linking is initiated through the action of lysyl oxidase on exposed lysines to form allysine. Subsequent spontaneous condensation reactions with other allysine or unmodified lysine residues result in various bi-, tri-, and tetrafunctional cross-links. The most abundant cross-links in mature elastin fibers are lysinonorleucine, allysine aldol, desmosine, and isodesmosine. In terms of processing, hydroxylation on proline residues within the sequence motif, GXPG, is most likely to be 4-hydroxy as this fits the requirement for 4-hydroxylation in vertebrates.

Its subcellular location is the secreted. The protein localises to the extracellular space. It is found in the extracellular matrix. Its function is as follows. Major structural protein of tissues such as aorta and nuchal ligament, which must expand rapidly and recover completely. Molecular determinant of the late arterial morphogenesis, stabilizing arterial structure by regulating proliferation and organization of vascular smooth muscle. The sequence is that of Elastin (Eln) from Mus musculus (Mouse).